The primary structure comprises 546 residues: Hexose oxidase (546 aa).

Positions 40 to 222 constitute an FAD-binding PCMH-type domain; it reads IGTNIDFVYV…TKYYFKDLPM (183 aa). The 6-(S-cysteinyl)-8alpha-(pros-histidyl)-FAD (His-Cys) cross-link spans 79–138; that stretch reads HCYEDFVFDECVKAIINVTGLVESGYDDDRGYFVSSGDTNWGSFKTLFRDHGRVLPGGSC. N-linked (GlcNAc...) asparagine glycosylation is found at N95 and N358.

It belongs to the oxygen-dependent FAD-linked oxidoreductase family. In terms of assembly, homodimer. Requires FAD as cofactor. Cleaved into 40 kDa and 29 kDa cleavage products, but the 2 polypeptide chains do not separate and seem to be physically linked together. In terms of processing, the FAD cofactor is bound via a bicovalent 6-S-cysteinyl, 8alpha-N1-histidyl FAD linkage.

The catalysed reaction is beta-D-glucose + O2 = D-glucono-1,5-lactone + H2O2. It carries out the reaction D-galactose + O2 = D-galactono-1,5-lactone + H2O2. The enzyme catalyses D-maltose + O2 = D-maltobiono-1,5-lactone + H2O2. It catalyses the reaction D-cellobiose + O2 = D-cellobiono-1,5-lactone + H2O2. The catalysed reaction is beta-lactose + O2 = lactobiono-1,5-lactone + H2O2. Its function is as follows. Catalyzes the selective oxidation of C1 hydroxyl moieties on mono- and disaccharides with concomitant reduction of molecular oxygen to hydrogen peroxide. This results in the formation of the corresponding lactones, which typically undergo spontaneous hydrolysis. Hexose oxidase is able to oxidize a variety of substrates including D-glucose, D-galactose, maltose, cellobiose, and lactose. The protein is Hexose oxidase (HOX) of Chondrus crispus (Carrageen Irish moss).